We begin with the raw amino-acid sequence, 37 residues long: Large ribosomal subunit protein bL36c (37 aa).

It belongs to the bacterial ribosomal protein bL36 family.

The protein localises to the plastid. The protein resides in the chloroplast. This chain is Large ribosomal subunit protein bL36c (rpl36), found in Euglena gracilis.